Consider the following 510-residue polypeptide: ATP synthase subunit alpha (510 aa).

169-176 (GDRQTGKT) serves as a coordination point for ATP.

Belongs to the ATPase alpha/beta chains family. In terms of assembly, F-type ATPases have 2 components, CF(1) - the catalytic core - and CF(0) - the membrane proton channel. CF(1) has five subunits: alpha(3), beta(3), gamma(1), delta(1), epsilon(1). CF(0) has three main subunits: a(1), b(2) and c(9-12). The alpha and beta chains form an alternating ring which encloses part of the gamma chain. CF(1) is attached to CF(0) by a central stalk formed by the gamma and epsilon chains, while a peripheral stalk is formed by the delta and b chains.

The protein resides in the cell inner membrane. It catalyses the reaction ATP + H2O + 4 H(+)(in) = ADP + phosphate + 5 H(+)(out). Its function is as follows. Produces ATP from ADP in the presence of a proton gradient across the membrane. The alpha chain is a regulatory subunit. The sequence is that of ATP synthase subunit alpha from Anaeromyxobacter sp. (strain K).